Consider the following 314-residue polypeptide: Inactive protein FRIGIDA (314 aa).

The span at Met-1–Pro-18 shows a compositional bias: low complexity. Positions Met-1–Glu-31 are disordered. Residues Val-67–Asn-97 adopt a coiled-coil conformation.

This sequence belongs to the Frigida family.

The protein localises to the nucleus. This chain is Inactive protein FRIGIDA (FRI), found in Arabidopsis thaliana (Mouse-ear cress).